The chain runs to 65 residues: Large ribosomal subunit protein bL35 (65 aa).

This sequence belongs to the bacterial ribosomal protein bL35 family.

This chain is Large ribosomal subunit protein bL35, found in Thiobacillus denitrificans (strain ATCC 25259 / T1).